Reading from the N-terminus, the 130-residue chain is Large ribosomal subunit protein bL20 (130 aa).

This sequence belongs to the bacterial ribosomal protein bL20 family.

Its function is as follows. Binds directly to 23S ribosomal RNA and is necessary for the in vitro assembly process of the 50S ribosomal subunit. It is not involved in the protein synthesizing functions of that subunit. This Nocardioides sp. (strain ATCC BAA-499 / JS614) protein is Large ribosomal subunit protein bL20.